Reading from the N-terminus, the 209-residue chain is Eukaryotic translation initiation factor isoform 4E-2 (209 aa).

The disordered stretch occupies residues 1–29; the sequence is MAEVEAALPVAATETPEVAAEGDAGAAEA. The segment covering 9-29 has biased composition (low complexity); sequence PVAATETPEVAAEGDAGAAEA. Residues 51 to 56, lysine 83, and 101 to 102 contribute to the mRNA site; these read PGAAWG and WE. Cysteine 106 and cysteine 145 are joined by a disulfide. MRNA is bound by residues 152-157 and 197-200; these read RQRQDK and RSQK.

This sequence belongs to the eukaryotic initiation factor 4E family. In terms of assembly, EIF4F is a multi-subunit complex, the composition of which varies with external and internal environmental conditions. It is composed of at least EIF4A, EIF4E and EIF4G. EIF4E is also known to interact with other partners. In higher plants two isoforms of EIF4F have been identified, named isoform EIF4F and isoform EIF(iso)4F. Isoform EIF4F has subunits p220 and p26, whereas isoform EIF(iso)4F has subunits p82 and p28. According to the redox status, the Cys-106-Cys-145 disulfide bridge may have a role in regulating protein function by affecting its ability to bind capped mRNA.

It localises to the cytoplasm. The protein resides in the nucleus. Component of the protein complex eIF4F, which is involved in the recognition of the mRNA cap, ATP-dependent unwinding of 5'-terminal secondary structure and recruitment of mRNA to the ribosome. Recognizes and binds the 7-methylguanosine-containing mRNA cap during an early step in the initiation of protein synthesis and facilitates ribosome binding by inducing the unwinding of the mRNAs secondary structures. The sequence is that of Eukaryotic translation initiation factor isoform 4E-2 from Triticum aestivum (Wheat).